Here is a 154-residue protein sequence, read N- to C-terminus: Transcriptional repressor NrdR (154 aa).

A zinc finger lies at 3–34; the sequence is CPFCNAPDTKVIDSRLATEGAQVRRRRECMSC. One can recognise an ATP-cone domain in the interval 49–139; that stretch reads PRVIKSDGNR…VYRSFQDVNA (91 aa).

This sequence belongs to the NrdR family. Zn(2+) is required as a cofactor.

Functionally, negatively regulates transcription of bacterial ribonucleotide reductase nrd genes and operons by binding to NrdR-boxes. In Hydrogenovibrio crunogenus (strain DSM 25203 / XCL-2) (Thiomicrospira crunogena), this protein is Transcriptional repressor NrdR.